The sequence spans 2004 residues: Alpha-2-macroglobulin homolog (2004 aa).

Positions 1-27 (MLCCLVFKGLLSMDLLRFLLISPFALI) are cleaved as a signal peptide.

It belongs to the protease inhibitor I39 (alpha-2-macroglobulin) family. Bacterial alpha-2-macroglobulin subfamily.

This is Alpha-2-macroglobulin homolog from Yersinia pestis.